The sequence spans 136 residues: Small ribosomal subunit protein uS11c (136 aa).

The protein belongs to the universal ribosomal protein uS11 family. Part of the 30S ribosomal subunit.

The protein localises to the plastid. Its subcellular location is the chloroplast. The protein is Small ribosomal subunit protein uS11c of Helianthus annuus (Common sunflower).